The chain runs to 347 residues: NADH-ubiquinone oxidoreductase chain 2 (347 aa).

10 helical membrane passes run 26–46, 60–80, 96–116, 123–143, 151–171, 178–198, 200–220, 240–260, 274–294, and 325–345; these read WLLAWMGLEMNMLAMIPILTM, FLTQATASMLLMMAIMINFML, SMALAALMMKLGLAPFHFWVP, SLTSGMILLTWQKLAPLSILY, ITILTVSGLLSILVGGWGGLN, ILAYSSIAHMGWMLIIMPYNP, LTILNLLIYILMTLSIFMIMM, MMILLTITLLSLGGLPPLSGF, DSIILPMSMAMFALLNLYFYM, and LLPPLIILSTLTLPLTPFLSI.

Belongs to the complex I subunit 2 family. In terms of assembly, core subunit of respiratory chain NADH dehydrogenase (Complex I) which is composed of 45 different subunits. Interacts with TMEM242.

The protein resides in the mitochondrion inner membrane. The enzyme catalyses a ubiquinone + NADH + 5 H(+)(in) = a ubiquinol + NAD(+) + 4 H(+)(out). In terms of biological role, core subunit of the mitochondrial membrane respiratory chain NADH dehydrogenase (Complex I) which catalyzes electron transfer from NADH through the respiratory chain, using ubiquinone as an electron acceptor. Essential for the catalytic activity and assembly of complex I. This Dugong dugon (Dugong) protein is NADH-ubiquinone oxidoreductase chain 2.